An 868-amino-acid chain; its full sequence is Metabotropic glutamate receptor 6 (868 aa).

Residues 1–20 (MARLLLALLAWLAQMSPVRA) form the signal peptide. The Extracellular portion of the chain corresponds to 21–576 (AGSVRLAGGL…VVRLTWSSPW (556 aa)). Cysteine 48 and cysteine 90 are disulfide-bonded. L-glutamate is bound by residues serine 145, 166–168 (AST), and tyrosine 216. 7 disulfide bridges follow: cysteine 235–cysteine 527, cysteine 358–cysteine 374, cysteine 414–cysteine 421, cysteine 509–cysteine 528, cysteine 513–cysteine 531, cysteine 534–cysteine 546, and cysteine 549–cysteine 562. A glycan (N-linked (GlcNAc...) asparagine) is linked at asparagine 287. Position 298 (aspartate 298) interacts with L-glutamate. Position 391 (lysine 391) interacts with L-glutamate. Asparagine 442 and asparagine 470 each carry an N-linked (GlcNAc...) asparagine glycan. Asparagine 558 carries N-linked (GlcNAc...) asparagine glycosylation. A helical transmembrane segment spans residues 577 to 599 (AAPPLLLAVLGIMATTTVVGTFV). The Cytoplasmic portion of the chain corresponds to 600 to 613 (RHNNTPIVRASGRE). Residues 614-634 (LSYVLLTGIFLIYAVTFLMVA) form a helical membrane-spanning segment. Over 635-645 (EPGAAVCATRR) the chain is Extracellular. The chain crosses the membrane as a helical span at residues 646-664 (LFLGLGTTLSYSALLTKTN). Topologically, residues 665 to 688 (RIYRIFEQGKRSVTPPPFISPTSQ) are cytoplasmic. A helical transmembrane segment spans residues 689 to 709 (LVITFSLTSLQVVGVIAWLGA). Residues 710–739 (QPPHSVIDYEEQRTVDPEQARGVLKCDMSD) are Extracellular-facing. Residues 740–761 (LSLIGCLGYSLLLMVTCTVYAI) form a helical membrane-spanning segment. The Cytoplasmic portion of the chain corresponds to 762–774 (KARGVPETFNEAK). The helical transmembrane segment at 775–797 (PIGFTMYTTCIVWLAFVPIFFGT) threads the bilayer. Over 798 to 810 (AQSAEKIYIQTTT) the chain is Extracellular. The chain crosses the membrane as a helical span at residues 811-836 (LTVSLSLSASVSLGMLYVPKTYVILF). The Cytoplasmic portion of the chain corresponds to 837–868 (HPEQNVQKRKRSLKTTSTVAAPPKGADTEDPK). The disordered stretch occupies residues 845–868 (RKRSLKTTSTVAAPPKGADTEDPK).

Belongs to the G-protein coupled receptor 3 family. As to quaternary structure, homodimer. Interacts with GPR179. Interacts with photoreceptor synaptic protein LRIT1 (via its N-terminal extracellular domain).

Its subcellular location is the cell membrane. It localises to the endoplasmic reticulum membrane. The protein resides in the golgi apparatus membrane. The protein localises to the cell projection. It is found in the dendrite. Functionally, G-protein coupled receptor for glutamate. Ligand binding causes a conformation change that triggers signaling via guanine nucleotide-binding proteins (G proteins) and modulates the activity of down-stream effectors, such as adenylate cyclase. Signaling inhibits adenylate cyclase activity. Signaling stimulates TRPM1 channel activity and Ca(2+) uptake. Required for normal vision. The sequence is that of Metabotropic glutamate receptor 6 (GRM6) from Oryctolagus cuniculus (Rabbit).